A 238-amino-acid chain; its full sequence is uncharacterized protein (238 aa).

The next 4 membrane-spanning stretches (helical) occupy residues 13–33 (TLFF…FGII), 40–60 (GSVG…LILG), 107–127 (VVLI…FCQV), and 140–160 (VISL…PMAF). 4Fe-4S ferredoxin-type domains lie at 178–208 (PFFQ…TEKL) and 204–233 (ITEK…FSYA). The [4Fe-4S] cluster site is built by Cys188, Cys191, Cys194, Cys198, Cys213, Cys216, Cys219, and Cys223.

Its subcellular location is the cell membrane. This is an uncharacterized protein from Methanocaldococcus jannaschii (strain ATCC 43067 / DSM 2661 / JAL-1 / JCM 10045 / NBRC 100440) (Methanococcus jannaschii).